The sequence spans 178 residues: Zinc finger CCHC domain-containing protein 10 (178 aa).

Residues 21–38 form a CCHC-type zinc finger; the sequence is VRCQKCLEFGHWTYECKG. A disordered region spans residues 66–178; it reads QSIGETNIEK…EPQKKKKKKK (113 aa). Low complexity-rich tracts occupy residues 85-113 and 121-164; these read SVTS…SSSS and SLSS…SSES.

This Mus musculus (Mouse) protein is Zinc finger CCHC domain-containing protein 10 (Zcchc10).